The chain runs to 173 residues: MADEGNIISNLNLEDGPVPNGADTSPAIGLISQYVKDLSVENPNAPESYQWAEAPDMAVDFNISARAIQPEIHEIELKINVTSKGAQGTAFIVELAYCGLIGMRNVPDDQAHPFLFAEGPRILFPFARRIIADAVRDAGYPPLMLEPIDFNGLYMQQLAQAQATAEATPAGEA.

Belongs to the SecB family. As to quaternary structure, homotetramer, a dimer of dimers. One homotetramer interacts with 1 SecA dimer.

The protein resides in the cytoplasm. Its function is as follows. One of the proteins required for the normal export of preproteins out of the cell cytoplasm. It is a molecular chaperone that binds to a subset of precursor proteins, maintaining them in a translocation-competent state. It also specifically binds to its receptor SecA. This is Protein-export protein SecB from Novosphingobium aromaticivorans (strain ATCC 700278 / DSM 12444 / CCUG 56034 / CIP 105152 / NBRC 16084 / F199).